The sequence spans 440 residues: Probable pectate lyase 10 (440 aa).

A signal peptide spans 1–28 (MVIFSRSFLALSTTLIILALCINSSTMA). The segment at 32–56 (EDLNSHSSSNSSTANKLPNDDGAWN) is disordered. Asparagine 41 and asparagine 76 each carry an N-linked (GlcNAc...) asparagine glycan. Positions 238, 262, and 266 each coordinate Ca(2+). Arginine 318 is an active-site residue.

It belongs to the polysaccharide lyase 1 family. It depends on Ca(2+) as a cofactor.

The catalysed reaction is Eliminative cleavage of (1-&gt;4)-alpha-D-galacturonan to give oligosaccharides with 4-deoxy-alpha-D-galact-4-enuronosyl groups at their non-reducing ends.. It participates in glycan metabolism; pectin degradation; 2-dehydro-3-deoxy-D-gluconate from pectin: step 2/5. The sequence is that of Probable pectate lyase 10 from Arabidopsis thaliana (Mouse-ear cress).